Here is a 336-residue protein sequence, read N- to C-terminus: Dihydroorotate dehydrogenase (quinone) (336 aa).

Residues 62–66 and T86 each bind FMN; that span reads AGLDK. Residue K66 coordinates substrate. 111-115 is a binding site for substrate; sequence NRMGF. 2 residues coordinate FMN: N139 and N172. N172 lines the substrate pocket. Residue S175 is the Nucleophile of the active site. Substrate is bound at residue N177. FMN is bound by residues K217 and T245. 246–247 contributes to the substrate binding site; it reads NT. FMN-binding positions include G268, G297, and 318 to 319; that span reads YS.

This sequence belongs to the dihydroorotate dehydrogenase family. Type 2 subfamily. In terms of assembly, monomer. FMN is required as a cofactor.

It is found in the cell membrane. The catalysed reaction is (S)-dihydroorotate + a quinone = orotate + a quinol. It participates in pyrimidine metabolism; UMP biosynthesis via de novo pathway; orotate from (S)-dihydroorotate (quinone route): step 1/1. Catalyzes the conversion of dihydroorotate to orotate with quinone as electron acceptor. In Vibrio atlanticus (strain LGP32) (Vibrio splendidus (strain Mel32)), this protein is Dihydroorotate dehydrogenase (quinone).